The primary structure comprises 110 residues: UPF0122 protein BcerKBAB4_3669 (110 aa).

The protein belongs to the UPF0122 family.

Functionally, might take part in the signal recognition particle (SRP) pathway. This is inferred from the conservation of its genetic proximity to ftsY/ffh. May be a regulatory protein. The chain is UPF0122 protein BcerKBAB4_3669 from Bacillus mycoides (strain KBAB4) (Bacillus weihenstephanensis).